A 461-amino-acid polypeptide reads, in one-letter code: MFLDDTIAAIATAHGEAGIGIVRISGEKALHIIDQVFQSKQGKKLKDISPRRITYGHIIDTERNERIDEVLVSYMKGPHTYTTEDVVEINCHGGMIPVKRILELILRKGARAADAGEFTKRAFLNGRIDLAQAEAVMDLVSAKTDMGFDVALNQLEGSLSKRVKKVKDELLDMLAHIEVSIDFSDEDVDEVTLDLLLKQSMEIEKKIKVLLETADTGKILREGLNTVIVGKPNVGKSSLLNALLKESRAIVTEVPGTTRDAIEEHFNIRGIPLNLIDTAGIRETEDIVEKIGVERSKAFFNKADLIILMLDASRELTPEDLQIMELVKSKKALILVNKTDLTSQIDYDRIIEIVGEKKVIKISLIEESGLEEVEEALVEIVYKGETRAKDSLLVTNVRHKNALERALESLTDGVQAIKQKMPLDFVEVDVKNAWDALGEITGDTVGEDLLDHIFQNFCIGK.

(6S)-5-formyl-5,6,7,8-tetrahydrofolate-binding residues include arginine 23, glutamate 88, and arginine 127. In terms of domain architecture, TrmE-type G spans 223 to 382; that stretch reads GLNTVIVGKP…VEEALVEIVY (160 aa). Asparagine 233 lines the K(+) pocket. Residues 233–238, 252–258, and 277–280 each bind GTP; these read NVGKSS, TEVPGTT, and DTAG. Serine 237 lines the Mg(2+) pocket. Positions 252, 254, and 257 each coordinate K(+). Threonine 258 contributes to the Mg(2+) binding site. A (6S)-5-formyl-5,6,7,8-tetrahydrofolate-binding site is contributed by lysine 461.

This sequence belongs to the TRAFAC class TrmE-Era-EngA-EngB-Septin-like GTPase superfamily. TrmE GTPase family. In terms of assembly, homodimer. Heterotetramer of two MnmE and two MnmG subunits. It depends on K(+) as a cofactor.

Its subcellular location is the cytoplasm. In terms of biological role, exhibits a very high intrinsic GTPase hydrolysis rate. Involved in the addition of a carboxymethylaminomethyl (cmnm) group at the wobble position (U34) of certain tRNAs, forming tRNA-cmnm(5)s(2)U34. The polypeptide is tRNA modification GTPase MnmE (Alkaliphilus metalliredigens (strain QYMF)).